Consider the following 357-residue polypeptide: Ribosomal RNA large subunit methyltransferase M (357 aa).

S-adenosyl-L-methionine-binding positions include S183, 216-219 (APGG), D235, D255, and D271. Residue K300 is the Proton acceptor of the active site.

It belongs to the class I-like SAM-binding methyltransferase superfamily. RNA methyltransferase RlmE family. RlmM subfamily. As to quaternary structure, monomer.

It localises to the cytoplasm. The catalysed reaction is cytidine(2498) in 23S rRNA + S-adenosyl-L-methionine = 2'-O-methylcytidine(2498) in 23S rRNA + S-adenosyl-L-homocysteine + H(+). Functionally, catalyzes the 2'-O-methylation at nucleotide C2498 in 23S rRNA. This chain is Ribosomal RNA large subunit methyltransferase M, found in Pseudomonas fluorescens (strain ATCC BAA-477 / NRRL B-23932 / Pf-5).